We begin with the raw amino-acid sequence, 372 residues long: Alanine dehydrogenase (372 aa).

Substrate is bound by residues Arg15 and Lys75. The Proton donor/acceptor role is filled by His96. NAD(+)-binding positions include Ser134, Ile178 to Ala179, Asp198, Ser220, Val239 to Leu240, Ile267 to Asp270, Arg280, and Val299 to Met302. Asp270 functions as the Proton donor/acceptor in the catalytic mechanism.

This sequence belongs to the AlaDH/PNT family. In terms of assembly, homohexamer.

The protein localises to the cytoplasm. It catalyses the reaction L-alanine + NAD(+) + H2O = pyruvate + NH4(+) + NADH + H(+). It participates in amino-acid degradation; L-alanine degradation via dehydrogenase pathway; NH(3) and pyruvate from L-alanine: step 1/1. Its activity is regulated as follows. Inhibited by p-chloromercuribenzoate and HgCl(2) and by Cu(2+) and Pb(2+) salts, unaffected by amino acids such as D-alanine and beta-alanine or by nucleotides or nucleosides. Its function is as follows. Catalyzes the reversible reductive amination of pyruvate to L-alanine. Prefers L-alanine for oxidative deamination, other substrates are poorly reactive. In the other direction 2-oxobutyrate is almost as reactive as pyruvate. Ammonia is the sole amino donor for the reductive amination of pyruvate, NADPH is inert. Reductive amination proceeds through a sequential, ordered ternary-binary mechanism, where NADH binds first followed by ammonia and pyruvate; the products are released in the order L-alanine and NAD(+). A key factor in the assimilation of L-alanine as an energy source via the tricarboxylic acid cycle during sporulation. The sequence is that of Alanine dehydrogenase (ald) from Lysinibacillus sphaericus (Bacillus sphaericus).